The sequence spans 453 residues: Allantoinase (453 aa).

6 residues coordinate Zn(2+): histidine 59, histidine 61, lysine 146, histidine 186, histidine 242, and aspartate 315. At lysine 146 the chain carries N6-carboxylysine.

It belongs to the metallo-dependent hydrolases superfamily. Allantoinase family. In terms of assembly, homotetramer. Requires Zn(2+) as cofactor. Post-translationally, carboxylation allows a single lysine to coordinate two zinc ions.

It catalyses the reaction (S)-allantoin + H2O = allantoate + H(+). It participates in nitrogen metabolism; (S)-allantoin degradation; allantoate from (S)-allantoin: step 1/1. Functionally, catalyzes the conversion of allantoin (5-ureidohydantoin) to allantoic acid by hydrolytic cleavage of the five-member hydantoin ring. This is Allantoinase from Salmonella agona (strain SL483).